Reading from the N-terminus, the 360-residue chain is MSNSNSGKVRVAVVYGGRSSEHSVSCVSAGAIMAHLDPEKYDVIPVGITVDGAWVVGETDPQKLTLIDRTMPEVEHHEEVRPSLDPAHRGEFHFSDGSLYATADVIFPVLHGRFGEDGTVQGLFALSDIPVVGPGVLASAAGMDKEYTKKLMAAEGLPVGREVILRDRTELTEAEKNLLGLPVFVKPARGGSSIGISRVTAWEDFNKAVGLARAHDEKVIVESEIVGSEVECGVLQYPDGRIVASVPALLSGTESGAGGFYDFDTKYLDNVVTAEIPAPLDEKTTELIQSLAVESFQALACEGLARVDFFVTANGPVLNEINTMPGFTPISMYPQMFTASGVAYEELLDVLVQQALHRDN.

Residues 149 to 353 (KKLMAAEGLP…YEELLDVLVQ (205 aa)) enclose the ATP-grasp domain. 176-231 (KNLLGLPVFVKPARGGSSIGISRVTAWEDFNKAVGLARAHDEKVIVESEIVGSEVE) is an ATP binding site. Mg(2+) contacts are provided by Asp-308, Glu-320, and Asn-322.

This sequence belongs to the D-alanine--D-alanine ligase family. The cofactor is Mg(2+). Requires Mn(2+) as cofactor.

It is found in the cytoplasm. It carries out the reaction 2 D-alanine + ATP = D-alanyl-D-alanine + ADP + phosphate + H(+). It functions in the pathway cell wall biogenesis; peptidoglycan biosynthesis. Functionally, cell wall formation. In Corynebacterium glutamicum (strain ATCC 13032 / DSM 20300 / JCM 1318 / BCRC 11384 / CCUG 27702 / LMG 3730 / NBRC 12168 / NCIMB 10025 / NRRL B-2784 / 534), this protein is D-alanine--D-alanine ligase.